A 145-amino-acid polypeptide reads, in one-letter code: Large ribosomal subunit protein uL11 (145 aa).

It belongs to the universal ribosomal protein uL11 family. In terms of assembly, part of the ribosomal stalk of the 50S ribosomal subunit. Interacts with L10 and the large rRNA to form the base of the stalk. L10 forms an elongated spine to which L12 dimers bind in a sequential fashion forming a multimeric L10(L12)X complex. In terms of processing, one or more lysine residues are methylated.

In terms of biological role, forms part of the ribosomal stalk which helps the ribosome interact with GTP-bound translation factors. This is Large ribosomal subunit protein uL11 from Rickettsia massiliae (strain Mtu5).